The primary structure comprises 900 residues: Chaperone protein ClpB 2 (900 aa).

One can recognise a Clp R domain in the interval 15 to 154; the sequence is PDRFSDPAWE…ESLLRQPSVS (140 aa). 2 repeat regions span residues 18 to 81 and 91 to 154; these read FSDP…LADQ and IGED…PSVS. The interval 151–183 is disordered; that stretch reads PSVSPAPAPPPVPTAASAPAPTPRSAPAPRVMA. Residues 154-163 are compositionally biased toward pro residues; it reads SPAPAPPPVP. The NBD1 stretch occupies residues 191–376; sequence ELEREPSALE…RRFQQVLIRE (186 aa). 244–251 is a binding site for ATP; sequence GEPGVGKT. The segment at 377–581 is linker; the sequence is PDLELSLEIL…IADLVARWTG (205 aa). Residues 427–557 adopt a coiled-coil conformation; sequence IDLIDEAAAQ…LEASQAEAQS (131 aa). The segment at 591–803 is NBD2; the sequence is ERRKLLALES…RIDEVIRFRP (213 aa). 641 to 648 is an ATP binding site; it reads GPTGVGKT. The C-terminal stretch occupies residues 804–900; it reads LKVKDLVRIV…GASLEFEPLE (97 aa).

Belongs to the ClpA/ClpB family. Homohexamer. The oligomerization is ATP-dependent.

Its subcellular location is the cytoplasm. Part of a stress-induced multi-chaperone system, it is involved in the recovery of the cell from heat-induced damage, in cooperation with DnaK, DnaJ and GrpE. Acts before DnaK, in the processing of protein aggregates. Protein binding stimulates the ATPase activity; ATP hydrolysis unfolds the denatured protein aggregates, which probably helps expose new hydrophobic binding sites on the surface of ClpB-bound aggregates, contributing to the solubilization and refolding of denatured protein aggregates by DnaK. The polypeptide is Chaperone protein ClpB 2 (clpB2) (Parasynechococcus marenigrum (strain WH8102)).